The following is a 60-amino-acid chain: Sperm protamine P1 (60 aa).

The segment at 1 to 60 (MARYRHSRSRSRSRYRRRRRRRSRYRSQRRRYRGRRRRRSRRGRRRGYSRRRYSRRRRRY) is disordered.

Belongs to the protamine P1 family. As to expression, testis.

It is found in the nucleus. It localises to the chromosome. In terms of biological role, protamines substitute for histones in the chromatin of sperm during the haploid phase of spermatogenesis. They compact sperm DNA into a highly condensed, stable and inactive complex. This chain is Sperm protamine P1 (PRM1), found in Osphranter rufus (Red kangaroo).